The primary structure comprises 681 residues: CAI-1 autoinducer sensor kinase/phosphatase CqsS (681 aa).

Transmembrane regions (helical) follow at residues Leu-17–Phe-37, Ala-73–Met-93, Ile-112–Ala-132, and Met-148–Phe-168. The Histidine kinase domain occupies Gly-187 to Gly-413. His-190 is modified (phosphohistidine; by autocatalysis). The region spanning Thr-564–Ile-681 is the Response regulatory domain. Asp-613 is subject to 4-aspartylphosphate.

It localises to the cell membrane. It catalyses the reaction ATP + protein L-histidine = ADP + protein N-phospho-L-histidine.. Its function is as follows. Senses the quorum-sensing autoinducer CAI-1 ((S)-3-hydroxytridecan-4-one) which probably functions as an intragenus signal. The sensory signal is then relayed to LuxU and LuxO. The sequence is that of CAI-1 autoinducer sensor kinase/phosphatase CqsS (cqsS) from Vibrio campbellii (strain ATCC BAA-1116).